The sequence spans 218 residues: Ras-related protein R-Ras (218 aa).

The interval 1–30 (MSSGAASGTGRGRPRGGGPGPRDPPPGETH) is disordered. A compositionally biased stretch (gly residues) spans 7 to 20 (SGTGRGRPRGGGPG). 36-44 (GGGGVGKSA) is a GTP binding site. Positions 58–66 (YDPTIEDSY) match the Effector region motif. Residues 83-87 (DTAGQ), 142-145 (NKAD), and 172-174 (SAK) each bind GTP. The residue at position 215 (C215) is a Cysteine methyl ester. C215 carries the S-geranylgeranyl cysteine lipid modification. Residues 216 to 218 (VLL) constitute a propeptide, removed in mature form.

It belongs to the small GTPase superfamily. Ras family. In terms of assembly, interacts with PLCE1. Interacts (active GTP-bound form preferentially) with RGS14. Interacts with OSBPL3. Interacts with ZDHHC19. Post-translationally, S-palmitoylated by ZDHHC19, leading to increased association with membranes and with rafts/caveolae as well as enhanced cell viability.

Its subcellular location is the cell membrane. It carries out the reaction GTP + H2O = GDP + phosphate + H(+). Its function is as follows. GTP-binding protein with GTPase activity, likely involved in the regulation of MAPK signaling pathway and thereby controlling multiple cellular processes. Regulates the organization of the actin cytoskeleton. With OSPBL3, modulates integrin beta-1 (ITGB1) activity. This chain is Ras-related protein R-Ras (Rras), found in Rattus norvegicus (Rat).